A 503-amino-acid polypeptide reads, in one-letter code: Poxin-Schlafen (503 aa).

A poxin-like region spans residues 1–236 (MFYAHAFGGY…SKEERVDYVL (236 aa)). Histidine 15 serves as the catalytic Proton donor. Catalysis depends on tyrosine 136, which acts as the Shared with catalytic histidine of dimeric partner. The active-site Proton acceptor; shared with catalytic histidine of dimeric partner is the lysine 140. The schlafen-like stretch occupies residues 237-503 (MKRLESIHHL…PDEWVSHIKF (267 aa)).

This sequence in the N-terminal section; belongs to the poxin family. The protein in the C-terminal section; belongs to the Schlafen protein family. Subgroup poxviridae B3 subfamily. As to quaternary structure, homodimer.

It carries out the reaction 2',3'-cGAMP + H2O = Gp(2'-5')Ap(3') + H(+). In terms of biological role, nuclease that is responsible for viral evasion of host cGAS-STING innate immunity. Cleaves 2',3'-cGAMP which is produced by host cGAS following recognition of intracellular foreign DNA and blocks the subsequent 2',3'-cGAMP-mediated activation of TMEM173/STING which normally spreads to adjacent cells and activates the interferon and NF-kappa-B immune responses. The sequence is that of Poxin-Schlafen (OPG188) from Cynomys gunnisoni (Gunnison's prairie dog).